The primary structure comprises 212 residues: Ribonuclease HII (212 aa).

The RNase H type-2 domain occupies 17-206 (RVIAGVDEAG…KSTKPQSLQT (190 aa)). Aspartate 23, glutamate 24, and aspartate 115 together coordinate a divalent metal cation.

The protein belongs to the RNase HII family. Requires Mn(2+) as cofactor. It depends on Mg(2+) as a cofactor.

It is found in the cytoplasm. The enzyme catalyses Endonucleolytic cleavage to 5'-phosphomonoester.. Its function is as follows. Endonuclease that specifically degrades the RNA of RNA-DNA hybrids. This chain is Ribonuclease HII, found in Syntrophus aciditrophicus (strain SB).